The primary structure comprises 331 residues: Uroporphyrinogen decarboxylase (331 aa).

Residues 22-26, D71, Y145, S199, and H308 contribute to the substrate site; that span reads RQAGR.

This sequence belongs to the uroporphyrinogen decarboxylase family. Homodimer.

It is found in the cytoplasm. The enzyme catalyses uroporphyrinogen III + 4 H(+) = coproporphyrinogen III + 4 CO2. Its pathway is porphyrin-containing compound metabolism; protoporphyrin-IX biosynthesis; coproporphyrinogen-III from 5-aminolevulinate: step 4/4. Functionally, catalyzes the decarboxylation of four acetate groups of uroporphyrinogen-III to yield coproporphyrinogen-III. In Picrophilus torridus (strain ATCC 700027 / DSM 9790 / JCM 10055 / NBRC 100828 / KAW 2/3), this protein is Uroporphyrinogen decarboxylase.